The primary structure comprises 344 residues: Lipopolysaccharide heptosyltransferase 3 (344 aa).

The protein belongs to the glycosyltransferase 9 family.

The catalysed reaction is an L-alpha-D-Hep-(1-&gt;3)-4-O-phospho-L-alpha-D-Hep-(1-&gt;5)-[alpha-Kdo-(2-&gt;4)]-alpha-Kdo-(2-&gt;6)-lipid A + ADP-L-glycero-beta-D-manno-heptose = an L-alpha-D-Hep-(1-&gt;7)-L-alpha-D-Hep-(1-&gt;3)-4-O-phospho-L-alpha-D-Hep-(1-&gt;5)-[alpha-Kdo-(2-&gt;4)]-alpha-Kdo-(2-&gt;6)-lipid A + ADP + H(+). It catalyses the reaction L-alpha-D-Hep-(1-&gt;3)-4-O-phospho-L-alpha-D-Hep-(1-&gt;5)-[alpha-Kdo-(2-&gt;4)]-alpha-Kdo-(2-&gt;6)-lipid A (E. coli) + ADP-L-glycero-beta-D-manno-heptose = L-alpha-D-Hep-(1-&gt;7)-L-alpha-D-Hep-(1-&gt;3)-4-O-phospho-L-alpha-D-Hep-(1-&gt;5)-[alpha-Kdo-(2-&gt;4)]-alpha-Kdo-(2-&gt;6)-lipid A (E. coli) + ADP + H(+). The protein operates within bacterial outer membrane biogenesis; LPS core biosynthesis. Glycosyltransferase involved in the biosynthesis of the core oligosaccharide region of lipopolysaccharide (LPS). Catalyzes the addition of the third heptose unit (HepIII) to the second heptose unit (HepII) of the phospho-Hep2-Kdo2-lipid A module. The protein is Lipopolysaccharide heptosyltransferase 3 of Escherichia coli (strain K12).